Reading from the N-terminus, the 5596-residue chain is Midasin (5596 aa).

Methionine 1 bears the N-acetylmethionine mark. AAA-ATPase protomer regions lie at residues 307–591, 659–978, 1048–1316, and 1362–1616; these read SVCK…TSKL, LIEQ…ASNP, KEPT…QEEI, and HIVW…NKMG. 329–336 lines the ATP pocket; that stretch reads GPIGCGKT. Positions 517–537 are disordered; it reads SSVGCEQAPEEVSEARRENKR. ATP-binding positions include 677-684 and 1084-1091; these read GETGTGKT and GETSVGKT. Position 1177 is a phosphothreonine (threonine 1177). 1390 to 1397 lines the ATP pocket; that stretch reads GDTGCGKT. Lysine 1683 bears the N6-acetyllysine mark. 2 AAA-ATPase protomer regions span residues 1738-1995 and 2053-2313; these read RLLR…AVFK and MKCV…IYIS. Residues 1753–1760 and 2066–2073 contribute to the ATP site; these read GSPGVGKT and GPASVGKT. Phosphoserine is present on serine 1754. The segment at 2418–4691 is linker; that stretch reads SLRAHETWGD…EGEGMKDVSD (2274 aa). The tract at residues 3989–4008 is disordered; that stretch reads LVESDKEEQPDFLPRPTDGA. Phosphothreonine is present on threonine 4212. Position 4538 is a phosphoserine (serine 4538). Disordered stretches follow at residues 4669 to 4688 and 4700 to 5260; these read ATEFHDYEGGGIGEGEGMKD and EDTF…SRES. A compositionally biased stretch (basic and acidic residues) spans 4702–4724; sequence TFQKGQEKDKEDPDSKSDIKGED. Residues 4741 to 4757 show a composition bias toward acidic residues; the sequence is ELEEQEEDDEKSDSEGG. Phosphoserine occurs at positions 4752 and 4754. Basic and acidic residues predominate over residues 4758-4780; that stretch reads DLDKHMGDLNGEEADKLDERLWG. Acidic residues predominate over residues 4781-4794; sequence DDDEEEDEEEEDNK. Residues 4822–4834 show a composition bias toward basic and acidic residues; the sequence is NKDKSQQDKKEEK. A compositionally biased stretch (acidic residues) spans 4835–4844; that stretch reads EEAEADDGGQ. Residues 4845 to 4855 show a composition bias toward basic and acidic residues; it reads GEDKINEQIDE. Acidic residues predominate over residues 4877 to 4888; that stretch reads EALDLPDDLNLD. Serine 4889 is subject to Phosphoserine. Residues 4896–4908 are compositionally biased toward acidic residues; that stretch reads EDTDNEEGEEENP. Threonine 4898 carries the post-translational modification Phosphothreonine. The span at 4909–4928 shows a compositional bias: basic and acidic residues; that stretch reads LEIKEKPEEAGHEAEERGET. Serine 4937 and serine 4946 each carry phosphoserine. The segment covering 4940–4966 has biased composition (acidic residues); sequence EPEEGPSEDDKAEGEEEMDTGADDQDG. A compositionally biased stretch (basic and acidic residues) spans 4968–4989; it reads AAQHPEEHSEEQQQSVEEKDKE. Residues 5007-5021 show a composition bias toward acidic residues; sequence QEEEEREDSDTEEQV. At serine 5015 the chain carries Phosphoserine. A compositionally biased stretch (polar residues) spans 5033–5046; sequence CGQTGVENMQNTQA. Residues 5054–5064 show a composition bias toward basic and acidic residues; sequence PEKEQGKEEHG. Basic residues predominate over residues 5088–5101; it reads KHTRKNTQSFKRKP. Positions 5105–5115 are enriched in basic and acidic residues; it reads DNERSMGDHNE. Residues 5132-5141 show a composition bias toward low complexity; that stretch reads QGPAQQPQAQ. Positions 5181 to 5197 are enriched in acidic residues; sequence QEEEEIEDTLMDTEEQE. Basic and acidic residues-rich tracts occupy residues 5198 to 5213 and 5233 to 5260; these read EFKAADVEQLKPEEIK and KTEEDQDPRTDKAHKETENEKPERSRES. One can recognise a VWFA domain in the interval 5384-5583; that stretch reads QICLAIDDSS…ALPETLSDAL (200 aa).

It belongs to the midasin family. In terms of assembly, associates with pre-60S ribosomes in the nucleoplasm. Interacts (via its hexameric AAA ATPase ring) with the PELP1 complex (via PELP1); the interaction is regulated by SUMO conjugation of PELP1 and is crucial for recruitment of MDN1 to the pre-ribosomal particle. Interacts (via VWFA/MIDAS domain) with WDR12 (via UBL domain). Interacts (via VWFA/MIDAS domain) with NLE1 (via UBL domain).

It is found in the nucleus. The protein resides in the nucleolus. The protein localises to the nucleoplasm. It localises to the cytoplasm. Its function is as follows. Nuclear chaperone required for maturation and nuclear export of pre-60S ribosome subunits. Functions at successive maturation steps to remove ribosomal factors at critical transition points, first driving the exit of early pre-60S particles from the nucleolus and then driving late pre-60S particles from the nucleus. At an early stage in 60S maturation, mediates the dissociation of the PeBoW complex (PES1-BOP1-WDR12) from early pre-60S particles, rendering them competent for export from the nucleolus to the nucleoplasm. Subsequently recruited to the nucleoplasmic particles through interaction with SUMO-conjugated PELP1 complex. This binding is only possible if the 5S RNP at the central protuberance has undergone the rotation to complete its maturation. In Homo sapiens (Human), this protein is Midasin (MDN1).